Consider the following 410-residue polypeptide: Tryptophan synthase beta chain (410 aa).

Lysine 98 carries the post-translational modification N6-(pyridoxal phosphate)lysine.

Belongs to the TrpB family. Tetramer of two alpha and two beta chains. It depends on pyridoxal 5'-phosphate as a cofactor.

The enzyme catalyses (1S,2R)-1-C-(indol-3-yl)glycerol 3-phosphate + L-serine = D-glyceraldehyde 3-phosphate + L-tryptophan + H2O. It participates in amino-acid biosynthesis; L-tryptophan biosynthesis; L-tryptophan from chorismate: step 5/5. Its function is as follows. The beta subunit is responsible for the synthesis of L-tryptophan from indole and L-serine. This Roseobacter denitrificans (strain ATCC 33942 / OCh 114) (Erythrobacter sp. (strain OCh 114)) protein is Tryptophan synthase beta chain.